A 369-amino-acid polypeptide reads, in one-letter code: sn-glycerol-3-phosphate import ATP-binding protein UgpC (369 aa).

The ABC transporter domain occupies 4-235; that stretch reads LSLRNVQKTY…PASTFVAGFI (232 aa). 37-44 contributes to the ATP binding site; sequence GPSGCGKS.

It belongs to the ABC transporter superfamily. sn-glycerol-3-phosphate importer (TC 3.A.1.1.3) family. The complex is composed of two ATP-binding proteins (UgpC), two transmembrane proteins (UgpA and UgpE) and a solute-binding protein (UgpB).

The protein resides in the cell inner membrane. It catalyses the reaction sn-glycerol 3-phosphate(out) + ATP + H2O = sn-glycerol 3-phosphate(in) + ADP + phosphate + H(+). Its function is as follows. Part of the ABC transporter complex UgpBAEC involved in sn-glycerol-3-phosphate (G3P) import. Responsible for energy coupling to the transport system. In Cupriavidus pinatubonensis (strain JMP 134 / LMG 1197) (Cupriavidus necator (strain JMP 134)), this protein is sn-glycerol-3-phosphate import ATP-binding protein UgpC.